Consider the following 409-residue polypeptide: tRNA-specific 2-thiouridylase MnmA (409 aa).

Residues 40–47 (GLSGGVDS) and Leu-66 contribute to the ATP site. Catalysis depends on Cys-127, which acts as the Nucleophile. The cysteines at positions 127 and 237 are disulfide-linked. ATP is bound at residue Gly-152. The interaction with tRNA stretch occupies residues 187 to 189 (KDQ). Cys-237 functions as the Cysteine persulfide intermediate in the catalytic mechanism. The interval 342–343 (RY) is interaction with tRNA.

The protein belongs to the MnmA/TRMU family.

It is found in the cytoplasm. It carries out the reaction S-sulfanyl-L-cysteinyl-[protein] + uridine(34) in tRNA + AH2 + ATP = 2-thiouridine(34) in tRNA + L-cysteinyl-[protein] + A + AMP + diphosphate + H(+). Catalyzes the 2-thiolation of uridine at the wobble position (U34) of tRNA, leading to the formation of s(2)U34. The sequence is that of tRNA-specific 2-thiouridylase MnmA from Prochlorococcus marinus (strain MIT 9313).